We begin with the raw amino-acid sequence, 136 residues long: DNA-directed RNA polymerase subunit omega (136 aa).

Belongs to the RNA polymerase subunit omega family. In terms of assembly, the RNAP catalytic core consists of 2 alpha, 1 beta, 1 beta' and 1 omega subunit. When a sigma factor is associated with the core the holoenzyme is formed, which can initiate transcription.

The catalysed reaction is RNA(n) + a ribonucleoside 5'-triphosphate = RNA(n+1) + diphosphate. In terms of biological role, promotes RNA polymerase assembly. Latches the N- and C-terminal regions of the beta' subunit thereby facilitating its interaction with the beta and alpha subunits. In Acidiphilium cryptum (strain JF-5), this protein is DNA-directed RNA polymerase subunit omega.